The chain runs to 606 residues: MTDPNPKGSTSKEGFGDWCLLEADCSDVENDLGQLFERDTDSDISDLLDDTELEQGNSLELFHQQECEQSEEQLQKLKRKYLSPKAIAQLSPRLESISLSPQQKSKRRLFAEQDSGLELTLNNEAEDVTPEVEVPAIDSRPDDEGGSGDVDIHYTSLLRSSNKKATLMAKFKESFGVGFNELTRQFKSHKTCCKDWVVSVYAVHDDLFESSKQLLQQHCDYIWVRGIGAMSLYLLCFKAGKNRGTVHKLITSMLNVHEQQILSEPPKLRNTAAALFWYKGCMGSGAFSHGPYPDWIAQQTILGHKSAEASTFDFSAMVQWAFDNHLLDEPDIAYQYARLAPEDANAVAWLAHNNQAKFVRECAAMVRFYKKGQMRDMSISEWIYTKINEVEGEGHWSDIVKFIRYQNINFIVFLTALKEFLHSVPKKNCILIYGPPNSGKSSFAMSLIRVLKGRVLSFVNSKSQFWLQPLSECKIALLDDVTDPCWVYMDTYLRNGLDGHYVSLDCKYRAPTQMKFPPLLLTSNINVHGEANYRYLHSRIRGFEFPNPFPMKADNTPQFELTDQSWKSFFTRLWTQLDLSDQEEEGEDGESQRAFQCSARSANEHL.

The short motif at 78–80 (KRK) is the Nuclear localization signal element. Phosphoserine; by host is present on residues Ser83 and Ser91. The Nuclear export signal motif lies at 90–99 (LSPRLESISL). The DNA-binding region stretch occupies residues 146 to 309 (GSGDVDIHYT…TILGHKSAEA (164 aa)). An SF3 helicase domain is found at 408–558 (INFIVFLTAL…FPMKADNTPQ (151 aa)). ATP is bound at residue 434–441 (GPPNSGKS). A Glycyl lysine isopeptide (Lys-Gly) (interchain with G-Cter in SUMO) cross-link involves residue Lys515. The segment at 581–606 (DQEEEGEDGESQRAFQCSARSANEHL) is disordered. Over residues 593–606 (RAFQCSARSANEHL) the composition is skewed to polar residues.

The protein belongs to the papillomaviridae E1 protein family. Can form hexamers. Interacts with E2 protein; this interaction increases E1 DNA binding specificity. Interacts with host DNA polymerase subunit POLA2. Interacts with host single stranded DNA-binding protein RPA1. Interacts with host TOP1; this interaction stimulates the enzymatic activity of TOP1. Phosphorylated. Post-translationally, sumoylated.

It localises to the host nucleus. It carries out the reaction Couples ATP hydrolysis with the unwinding of duplex DNA by translocating in the 3'-5' direction.. It catalyses the reaction ATP + H2O = ADP + phosphate + H(+). ATP-dependent DNA 3'-5' helicase required for initiation of viral DNA replication. It forms a complex with the viral E2 protein. The E1-E2 complex binds to the replication origin which contains binding sites for both proteins. During the initial step, a dimer of E1 interacts with a dimer of protein E2 leading to a complex that binds the viral origin of replication with high specificity. Then, a second dimer of E1 displaces the E2 dimer in an ATP-dependent manner to form the E1 tetramer. Following this, two E1 monomers are added to each half of the site, which results in the formation of two E1 trimers on the viral ori. Subsequently, two hexamers will be created. The double hexamer acts as a bi-directional helicase machinery and unwinds the viral DNA and then recruits the host DNA polymerase to start replication. The polypeptide is Replication protein E1 (Human papillomavirus type 5b).